The sequence spans 363 residues: Fructose-bisphosphate aldolase 2 (363 aa).

Serine 61 is a binding site for D-glyceraldehyde 3-phosphate. The Proton donor role is filled by aspartate 109. Zn(2+) is bound by residues histidine 110, aspartate 144, glutamate 174, and histidine 226. Residue glycine 227 participates in dihydroxyacetone phosphate binding. Histidine 264 is a binding site for Zn(2+). 265-267 (GGS) provides a ligand contact to dihydroxyacetone phosphate.

Belongs to the class II fructose-bisphosphate aldolase family. In terms of assembly, homodimer. Requires Zn(2+) as cofactor.

The enzyme catalyses beta-D-fructose 1,6-bisphosphate = D-glyceraldehyde 3-phosphate + dihydroxyacetone phosphate. The protein operates within carbohydrate degradation; glycolysis; D-glyceraldehyde 3-phosphate and glycerone phosphate from D-glucose: step 4/4. Catalyzes the aldol condensation of dihydroxyacetone phosphate (DHAP or glycerone-phosphate) with glyceraldehyde 3-phosphate (G3P) to form fructose 1,6-bisphosphate (FBP) in gluconeogenesis and the reverse reaction in glycolysis. This Paracoccidioides lutzii (strain ATCC MYA-826 / Pb01) (Paracoccidioides brasiliensis) protein is Fructose-bisphosphate aldolase 2 (FBA2).